A 231-amino-acid chain; its full sequence is MEDQRRGQGEEEDDSGSLPSPPLLPAHRNTDFFIDNILRPDFGCKRERERVTRDSGVRPTALPDSRSDGVSSSASSTVSSPVSSRQSNKVEQGSSKSSSPSKDSQKQILWPAWVYCTRYSDRPSSGPRTRKLKKKNNNTESDDKRPRTAFTAEQLQRLKAEFQTSRYITEQRRQALARELGLNESQIKIWFQNKRAKIKKSSGFKNALAMQLMAQGLYNHSTTTIQEEEDN.

Disordered stretches follow at residues 1 to 29 (MEDQRRGQGEEEDDSGSLPSPPLLPAHRN), 43 to 105 (GCKR…KDSQ), and 121 to 148 (DRPSSGPRTRKLKKKNNNTESDDKRPRT). The span at 43–56 (GCKRERERVTRDSG) shows a compositional bias: basic and acidic residues. Over residues 68–102 (DGVSSSASSTVSSPVSSRQSNKVEQGSSKSSSPSK) the composition is skewed to low complexity. The segment at residues 143–202 (DKRPRTAFTAEQLQRLKAEFQTSRYITEQRRQALARELGLNESQIKIWFQNKRAKIKKSS) is a DNA-binding region (homeobox).

It belongs to the engrailed homeobox family.

Its subcellular location is the nucleus. This is Homeobox protein engrailed-1a (eng1a) from Danio rerio (Zebrafish).